Here is a 341-residue protein sequence, read N- to C-terminus: MVDLLTGLLPPFVWRLLIIVLQIVAIVLPLLIAVAYLTYAERKVIGAMQLRKGPNVVGPFGLLQPMADGLKLFVKETVLPTSANRVVFVGAPMLTFFLALVAWAVIPFDKGWVLADINVGVLYLFAISSLGVYGIIMAGWASNSKYAFLGGLRSAAQMVSYEVSIGFILISVLLTVGSLNLSDVVTAQSKMWFIVPHFPLFILFIISGLAETNRAPFDLPEAEAELVAGYNVEYSAMTFALFFLGEYANMLMMGAMTSILFLGGWMAPFGLGWLPIPGLIWFVLKICLVMFVFLWVRATFPRYRYDQLMRLGWKVFLPFSLFWLVLTASVLTAFGWLPNQG.

Transmembrane regions (helical) follow at residues 16–36 (LLIIVLQIVAIVLPLLIAVAY), 86–106 (VVFVGAPMLTFFLALVAWAVI), 119–139 (VGVLYLFAISSLGVYGIIMAG), 165–185 (IGFILISVLLTVGSLNLSDVV), 191–211 (MWFIVPHFPLFILFIISGLAE), 254–274 (GAMTSILFLGGWMAPFGLGWL), 276–296 (IPGLIWFVLKICLVMFVFLWV), and 315–335 (VFLPFSLFWLVLTASVLTAFG).

It belongs to the complex I subunit 1 family. As to quaternary structure, NDH-1 is composed of 14 different subunits. Subunits NuoA, H, J, K, L, M, N constitute the membrane sector of the complex.

It is found in the cell inner membrane. It catalyses the reaction a quinone + NADH + 5 H(+)(in) = a quinol + NAD(+) + 4 H(+)(out). NDH-1 shuttles electrons from NADH, via FMN and iron-sulfur (Fe-S) centers, to quinones in the respiratory chain. The immediate electron acceptor for the enzyme in this species is believed to be ubiquinone. Couples the redox reaction to proton translocation (for every two electrons transferred, four hydrogen ions are translocated across the cytoplasmic membrane), and thus conserves the redox energy in a proton gradient. This subunit may bind ubiquinone. This Paramagnetospirillum magneticum (strain ATCC 700264 / AMB-1) (Magnetospirillum magneticum) protein is NADH-quinone oxidoreductase subunit H.